Here is a 435-residue protein sequence, read N- to C-terminus: Probable alpha-galactosidase B (435 aa).

The first 18 residues, 1-18 (MLTSLSLTALALLPSANA), serve as a signal peptide directing secretion. Cys-41 and Cys-73 are oxidised to a cystine. Residue Asn-81 is glycosylated (N-linked (GlcNAc...) asparagine). Cys-123 and Cys-153 are disulfide-bonded. Catalysis depends on Asp-151, which acts as the Nucleophile. Residues Asn-158 and Asn-176 are each glycosylated (N-linked (GlcNAc...) asparagine). Residue 221–225 (DWGQA) participates in substrate binding. Residue Asn-232 is glycosylated (N-linked (GlcNAc...) asparagine). The active-site Proton donor is the Asp-243. An N-linked (GlcNAc...) asparagine glycan is attached at Asn-378.

The protein belongs to the glycosyl hydrolase 27 family.

The protein localises to the secreted. It catalyses the reaction Hydrolysis of terminal, non-reducing alpha-D-galactose residues in alpha-D-galactosides, including galactose oligosaccharides, galactomannans and galactolipids.. Hydrolyzes a variety of simple alpha-D-galactoside as well as more complex molecules such as oligosaccharides and polysaccharides. The chain is Probable alpha-galactosidase B (agl1) from Penicillium simplicissimum.